Here is a 200-residue protein sequence, read N- to C-terminus: Large ribosomal subunit protein uL4 (200 aa).

A disordered region spans residues 43–71 (RAQKTRAEVSGSGKKPWRQKGTGRARSGD).

It belongs to the universal ribosomal protein uL4 family. In terms of assembly, part of the 50S ribosomal subunit.

Its function is as follows. One of the primary rRNA binding proteins, this protein initially binds near the 5'-end of the 23S rRNA. It is important during the early stages of 50S assembly. It makes multiple contacts with different domains of the 23S rRNA in the assembled 50S subunit and ribosome. In terms of biological role, forms part of the polypeptide exit tunnel. The chain is Large ribosomal subunit protein uL4 from Histophilus somni (strain 129Pt) (Haemophilus somnus).